Consider the following 302-residue polypeptide: Acetylglutamate kinase (302 aa).

Residues 75–76 (GG), Arg-97, and Asn-198 each bind substrate.

Belongs to the acetylglutamate kinase family. ArgB subfamily.

It is found in the cytoplasm. It catalyses the reaction N-acetyl-L-glutamate + ATP = N-acetyl-L-glutamyl 5-phosphate + ADP. It functions in the pathway amino-acid biosynthesis; L-arginine biosynthesis; N(2)-acetyl-L-ornithine from L-glutamate: step 2/4. Its function is as follows. Catalyzes the ATP-dependent phosphorylation of N-acetyl-L-glutamate. In Leifsonia xyli subsp. xyli (strain CTCB07), this protein is Acetylglutamate kinase.